Reading from the N-terminus, the 314-residue chain is Malate dehydrogenase (314 aa).

Residues 7–13 and D34 each bind NAD(+); that span reads GAAGGIG. Residues R81 and R87 each coordinate substrate. NAD(+)-binding positions include N94 and 117 to 119; that span reads ITN. Substrate contacts are provided by N119 and R153. The active-site Proton acceptor is the H177. Residue M230 participates in NAD(+) binding.

The protein belongs to the LDH/MDH superfamily. MDH type 1 family. As to quaternary structure, homodimer.

It carries out the reaction (S)-malate + NAD(+) = oxaloacetate + NADH + H(+). Catalyzes the reversible oxidation of malate to oxaloacetate. In Glaesserella parasuis serovar 5 (strain SH0165) (Haemophilus parasuis), this protein is Malate dehydrogenase.